The chain runs to 150 residues: 1,4-dihydroxy-2-naphthoyl-CoA hydrolase (150 aa).

Aspartate 22 is a catalytic residue.

Belongs to the 4-hydroxybenzoyl-CoA thioesterase family. DHNA-CoA hydrolase subfamily.

It carries out the reaction 1,4-dihydroxy-2-naphthoyl-CoA + H2O = 1,4-dihydroxy-2-naphthoate + CoA + H(+). It participates in cofactor biosynthesis; phylloquinone biosynthesis. It functions in the pathway quinol/quinone metabolism; 1,4-dihydroxy-2-naphthoate biosynthesis; 1,4-dihydroxy-2-naphthoate from chorismate: step 7/7. Catalyzes the hydrolysis of 1,4-dihydroxy-2-naphthoyl-CoA (DHNA-CoA) to 1,4-dihydroxy-2-naphthoate (DHNA), a reaction involved in phylloquinone (vitamin K1) biosynthesis. The polypeptide is 1,4-dihydroxy-2-naphthoyl-CoA hydrolase (Prochlorococcus marinus (strain NATL1A)).